A 248-amino-acid chain; its full sequence is Proteasome subunit alpha (248 aa).

This sequence belongs to the peptidase T1A family. The 20S proteasome core is composed of 14 alpha and 14 beta subunits that assemble into four stacked heptameric rings, resulting in a barrel-shaped structure. The two inner rings, each composed of seven catalytic beta subunits, are sandwiched by two outer rings, each composed of seven alpha subunits. The catalytic chamber with the active sites is on the inside of the barrel. Has a gated structure, the ends of the cylinder being occluded by the N-termini of the alpha-subunits. Is capped at one or both ends by the proteasome regulatory ATPase, PAN.

It is found in the cytoplasm. With respect to regulation, the formation of the proteasomal ATPase PAN-20S proteasome complex, via the docking of the C-termini of PAN into the intersubunit pockets in the alpha-rings, triggers opening of the gate for substrate entry. Interconversion between the open-gate and close-gate conformations leads to a dynamic regulation of the 20S proteasome proteolysis activity. Its function is as follows. Component of the proteasome core, a large protease complex with broad specificity involved in protein degradation. The protein is Proteasome subunit alpha of Methanothermobacter thermautotrophicus (strain ATCC 29096 / DSM 1053 / JCM 10044 / NBRC 100330 / Delta H) (Methanobacterium thermoautotrophicum).